Here is a 155-residue protein sequence, read N- to C-terminus: DNA gyrase inhibitor (155 aa).

Belongs to the DNA gyrase inhibitor family. Interacts with DNA gyrase.

The protein resides in the cytoplasm. In terms of biological role, inhibits the supercoiling activity of DNA gyrase. Acts by inhibiting DNA gyrase at an early step, prior to (or at the step of) binding of DNA by the gyrase. It protects cells against toxins that target DNA gyrase, by inhibiting activity of these toxins and reducing the formation of lethal double-strand breaks in the cell. The sequence is that of DNA gyrase inhibitor from Citrobacter koseri (strain ATCC BAA-895 / CDC 4225-83 / SGSC4696).